The following is a 223-amino-acid chain: Urease accessory protein UreF (223 aa).

It belongs to the UreF family. UreD, UreF and UreG form a complex that acts as a GTP-hydrolysis-dependent molecular chaperone, activating the urease apoprotein by helping to assemble the nickel containing metallocenter of UreC. The UreE protein probably delivers the nickel.

Its subcellular location is the cytoplasm. Functionally, required for maturation of urease via the functional incorporation of the urease nickel metallocenter. This is Urease accessory protein UreF from Rhizobium leguminosarum bv. trifolii (strain WSM2304).